The chain runs to 284 residues: uncharacterized protein (284 aa).

Residues 1-24 (MLYSRESRTTVLFLALVTSLTVLC) form the signal peptide. Residues 25-84 (HSVDVTTVFTTSTITEITTVTAAPQPQNKAETALNTATNIIQTMQFLFNCAPFKWKGPLK) are Cytoplasmic-facing. The helical transmembrane segment at 85–104 (ITSCALNFIVLLLTAWGYLL) threads the bilayer. Topologically, residues 105-284 (KYLQENKLNS…SVHMYSSSLL (180 aa)) are extracellular. A glycan (N-linked (GlcNAc...) asparagine) is linked at Asn270.

To yeast YNL019c.

Its subcellular location is the cell membrane. This is an uncharacterized protein from Saccharomyces cerevisiae (strain ATCC 204508 / S288c) (Baker's yeast).